Here is a 363-residue protein sequence, read N- to C-terminus: Double-strand-specific pac1 ribonuclease (363 aa).

Disordered stretches follow at residues 1–35 (MGRF…KRSS) and 92–138 (SRHD…PPLR). The segment covering 13 to 22 (DSSSSASDSL) has biased composition (low complexity). Residues 24–35 (RGRRSLGHKRSS) are compositionally biased toward basic residues. Residue serine 122 is modified to Phosphoserine. One can recognise an RNase III domain in the interval 139–262 (SEKLKEQVFM…YLGALILDGQ (124 aa)). Positions 285 to 356 (RPIDKLAKSK…AMQALEVLAK (72 aa)) constitute a DRBM domain.

Mg(2+) is required as a cofactor.

The catalysed reaction is Endonucleolytic cleavage to 5'-phosphomonoester.. Its function is as follows. Digests double-stranded RNA. Converts long double-stranded RNAs into short oligonucleotides, leaving 5'-phosphates on their cleavage products. Probably inhibits mating and meiosis by degrading a specific mRNA required for sexual development. In Schizosaccharomyces pombe (strain 972 / ATCC 24843) (Fission yeast), this protein is Double-strand-specific pac1 ribonuclease (pac1).